Reading from the N-terminus, the 192-residue chain is Protein FAM210B, mitochondrial (192 aa).

A mitochondrion-targeting transit peptide spans 1 to 58 (MAGLLALLGPAGRVGARVRPRATWLLGATAPCAPPPLALALLPPRLDARLLRTARGDC). The tract at residues 57 to 80 (DCRGHQDPSQATGTTGSSVSCTEE) is disordered. Positions 63-77 (DPSQATGTTGSSVSC) are enriched in polar residues. A DUF1279 domain is found at 80-191 (EKKQSKSQQL…VGFFKPPAAK (112 aa)). 2 helical membrane passes run 99–119 (VGVS…YMVV) and 150–170 (FVVA…ITLV).

Belongs to the FAM210 family. In terms of tissue distribution, expressed in late erythroblast differentiation stages. Underexpressed in ovarian cancer epithelia cells compared with normal human ovarian surface epithelia.

It is found in the mitochondrion. Its subcellular location is the mitochondrion outer membrane. Its function is as follows. Plays a role in erythroid differentiation. Involved in cell proliferation and tumor cell growth suppression. Involved in the metabolic reprogramming of cancer cells in a PDK4-dependent manner. The protein is Protein FAM210B, mitochondrial of Homo sapiens (Human).